We begin with the raw amino-acid sequence, 3119 residues long: Huntingtin (3119 aa).

A disordered region spans residues 1-65; sequence MATLEKLMKA…LPGPAEEPLH (65 aa). The residue at position 9 (Lys-9) is an N6-acetyllysine. The span at 24 to 60 shows a compositional bias: pro residues; it reads QPPPQAPPPPPPPPPQPPQPPPQGQPPPPPPPLPGPA. An N6-acetyllysine mark is found at Lys-155 and Lys-213. HEAT repeat units follow at residues 183–220 and 225–262; these read PYLVNLLPCLTRTSKRPEESVQETLAAAVPKIMASFGN and NEIKVLLKAFIANLKSSSPTVRRTAAGSAVSICQHSRR. An N6-acetyllysine modification is found at Lys-322. Residues Ser-396, Ser-398, and Ser-411 each carry the phosphoserine modification. Lys-421 is subject to N6-acetyllysine. The segment at 470 to 481 is interaction with ZDHHC17; it reads GHDIITEQPRSQ. Residues 495–558 form a disordered region; it reads DLTSAATDGD…DSAVTPSDSS (64 aa). The span at 529-558 shows a compositional bias: polar residues; that stretch reads DGTQASSPISDSSQTTTEGPDSAVTPSDSS. A lipid anchor (N-myristoyl glycine) is attached at Gly-530. Ser-620 and Ser-623 each carry phosphoserine. 2 HEAT repeats span residues 782–819 and 882–920; these read FSLVDCIPLLQKTLKDESSVTCKLACTAVRHCVLSLCS and KLQERVLNNVVIYLLGDEDPRVRHVAATSLTRLVPKLFY. The tract at residues 1146 to 1204 is disordered; it reads KAALPSLTNPPSLSPIRRKGKEKEPGEQASTPMSPKKVGEASAASRQSDTSGPVTASKS. The segment covering 1149–1160 has biased composition (low complexity); the sequence is LPSLTNPPSLSP. Phosphoserine; by CDK5 is present on residues Ser-1159 and Ser-1179. Polar residues predominate over residues 1189-1204; that stretch reads ASRQSDTSGPVTASKS. One copy of the HEAT 5 repeat lies at 1404–1441; the sequence is LFEPLVIKALKQYTTTTSVQLQKQVLDLLAQLVQLRVN. Residue Ser-1853 is modified to Phosphoserine. The short motif at 2372–2381 is the Nuclear export signal element; it reads IVISLARLPL. The disordered stretch occupies residues 2610-2637; it reads EEEWDEEEEEESDVPAPTSPPVSPVNSR. The segment covering 2611–2622 has biased composition (acidic residues); it reads EEWDEEEEEESD.

The protein belongs to the huntingtin family. As to quaternary structure, interacts with PFN1. Interacts through its N-terminus with PRPF40A. Interacts with PQBP1. Interacts with SETD2. Interacts with SH3GLB1. Interacts with SYVN. Interacts with TPR; the interaction is inhibited by forms of Huntingtin with expanded polyglutamine stretch. Interacts with ZDHHC13 (via ANK repeats). Interacts with ZDHHC17 (via ANK repeats). Interacts with F8A1/F8A2/F8A3. Found in a complex with F8A1/F8A2/F8A3, HTT and RAB5A; mediates the recruitment of HTT by RAB5A. Post-translationally, phosphorylation at Ser-1159 and Ser-1179 by CDK5 in response to DNA damage in nuclei of neurons protects neurons against polyglutamine expansion as well as DNA damage mediated toxicity. In terms of processing, cleaved by caspases downstream of the polyglutamine stretch. Myristoylated at Gly-530, following proteolytic cleavage at Asp-529. As to expression, the highest level is seen throughout the brain, but it is also found in the stomach, heart, testis, adipose tissue, muscle, spleen, liver, and kidney.

The protein resides in the cytoplasm. Its subcellular location is the nucleus. The protein localises to the cytoplasmic vesicle. It localises to the autophagosome. Functionally, may play a role in microtubule-mediated transport or vesicle function. In terms of biological role, promotes the formation of autophagic vesicles. The polypeptide is Huntingtin (Htt) (Mus musculus (Mouse)).